The chain runs to 375 residues: Fluoride export protein 2 (375 aa).

Topologically, residues 1 to 11 (MIFNPVISNHK) are cytoplasmic. A helical membrane pass occupies residues 12-32 (LSHYIHVFCTFTTFCILGTET). The Extracellular segment spans residues 33–34 (RQ). A helical membrane pass occupies residues 35–55 (AITALSTYTPAFVTAPTVLWS). At 56-79 (NCSSCMLMGIMQSLNAYTWMKDHQ) the chain is on the cytoplasmic side. A helical transmembrane segment spans residues 80–100 (VLFLGVTTGYCGALSSFSSML). The Extracellular portion of the chain corresponds to 101–127 (LEMFEHSTNLTNGNIANHTKLPNRAYG). N-linked (GlcNAc...) asparagine glycosylation is found at asparagine 109 and asparagine 117. A helical membrane pass occupies residues 128 to 148 (IMEFLSVLLVHLMVSMGSLIF). Topologically, residues 149–213 (GRQLGKEVIV…FKKFFDVVDK (65 aa)) are cytoplasmic. Residues 214–234 (LAYALAFPLIILFVVLCAYYE) form a helical membrane-spanning segment. N-linked (GlcNAc...) asparagine glycosylation occurs at asparagine 235. Residues 235–241 (NYSRGKW) are Extracellular-facing. Residues 242-262 (TLPCLFGIFAGFLRYWLAEMF) traverse the membrane as a helical segment. At 263–268 (NKTNKK) the chain is on the cytoplasmic side. Residues 269-289 (FPLGTFLANVFATLLIGIFTM) form a helical membrane-spanning segment. The Extracellular portion of the chain corresponds to 290 to 310 (VQRGKKHFSTDIPIVNSLNSC). Residues 311–331 (HIVSALISGFCGTLSTISTFI) traverse the membrane as a helical segment. At 332 to 338 (NEGYKLS) the chain is on the cytoplasmic side. A helical membrane pass occupies residues 339 to 359 (FINMLIYYTVSIGISYCLLVI). Residues 360 to 375 (TLGSYAWTRGLTNPIC) are Extracellular-facing.

It belongs to the fluoride channel Fluc/FEX (TC 1.A.43) family.

Its subcellular location is the cell membrane. It carries out the reaction fluoride(in) = fluoride(out). Its function is as follows. Fluoride channel required for the rapid expulsion of cytoplasmic fluoride. In Saccharomyces cerevisiae (strain ATCC 204508 / S288c) (Baker's yeast), this protein is Fluoride export protein 2.